The primary structure comprises 415 residues: Serine hydroxymethyltransferase (415 aa).

(6S)-5,6,7,8-tetrahydrofolate-binding positions include Leu-117 and 121–123 (GHL). Lys-226 is subject to N6-(pyridoxal phosphate)lysine.

This sequence belongs to the SHMT family. As to quaternary structure, homodimer. Pyridoxal 5'-phosphate is required as a cofactor.

The protein localises to the cytoplasm. It carries out the reaction (6R)-5,10-methylene-5,6,7,8-tetrahydrofolate + glycine + H2O = (6S)-5,6,7,8-tetrahydrofolate + L-serine. It participates in one-carbon metabolism; tetrahydrofolate interconversion. Its pathway is amino-acid biosynthesis; glycine biosynthesis; glycine from L-serine: step 1/1. Functionally, catalyzes the reversible interconversion of serine and glycine with tetrahydrofolate (THF) serving as the one-carbon carrier. This reaction serves as the major source of one-carbon groups required for the biosynthesis of purines, thymidylate, methionine, and other important biomolecules. Also exhibits THF-independent aldolase activity toward beta-hydroxyamino acids, producing glycine and aldehydes, via a retro-aldol mechanism. The sequence is that of Serine hydroxymethyltransferase from Leptospira borgpetersenii serovar Hardjo-bovis (strain JB197).